Here is a 232-residue protein sequence, read N- to C-terminus: Ethylene-responsive transcription factor ERF025 (232 aa).

Residues 1 to 29 (MSNNNNSPTTVNQETTTSREVSITLPTDQ) are compositionally biased toward polar residues. The interval 1–63 (MSNNNNSPTT…TATGLSGKHS (63 aa)) is disordered. Residues 30-50 (SPQTSPGSSSSPSPRPSGGSP) are compositionally biased toward low complexity. The AP2/ERF DNA-binding region spans 64 to 120 (IFRGIRLRNGKWVSEIREPRKTTRIWLGTYPVPEMAAAAYDVAALALKGPDAVLNFP). The interval 213–232 (PTMEDDSPENHEGDNLWSYK) is disordered.

It belongs to the AP2/ERF transcription factor family. ERF subfamily.

It is found in the nucleus. Probably acts as a transcriptional activator. Binds to the GCC-box pathogenesis-related promoter element. May be involved in the regulation of gene expression by stress factors and by components of stress signal transduction pathways. This Arabidopsis thaliana (Mouse-ear cress) protein is Ethylene-responsive transcription factor ERF025 (ERF025).